A 750-amino-acid polypeptide reads, in one-letter code: Putative tyrosine-protein kinase EpsB (750 aa).

Residues 1–31 lie on the Cytoplasmic side of the membrane; sequence MTQNLPQPPAVNAPENELDLVRYLDVLVANR. The helical transmembrane segment at 32 to 52 threads the bilayer; it reads WLIAGIAAAVMLLGAAYAFLA. Topologically, residues 53-444 are periplasmic; sequence RPVYEADIMV…VPEEPVKPKK (392 aa). The chain crosses the membrane as a helical span at residues 445–465; sequence LTVTPLAGVLGVVLGVMAAFV. Residues 466 to 750 lie on the Cytoplasmic side of the membrane; that stretch reads RNALFGGITD…NSKPPEAESA (285 aa).

Belongs to the etk/wzc family.

Its subcellular location is the cell inner membrane. It carries out the reaction L-tyrosyl-[protein] + ATP = O-phospho-L-tyrosyl-[protein] + ADP + H(+). Functionally, probably involved in polymerization and/or export of exopolysaccharide EPS I which functions as a virulence factor. May be involved in an ATP-dependent process in the pathway for EPS I production, possibly export of the trimeric repeat units across the inner membrane or their polymerization. The sequence is that of Putative tyrosine-protein kinase EpsB (epsB) from Ralstonia solanacearum (Pseudomonas solanacearum).